The chain runs to 484 residues: Glutamate--tRNA ligase (484 aa).

Positions 11 to 21 (PSPTGLLHIGN) match the 'HIGH' region motif. The short motif at 255-259 (KLSKR) is the 'KMSKS' region element. Lys258 serves as a coordination point for ATP.

The protein belongs to the class-I aminoacyl-tRNA synthetase family. Glutamate--tRNA ligase type 1 subfamily. Monomer.

Its subcellular location is the cytoplasm. The enzyme catalyses tRNA(Glu) + L-glutamate + ATP = L-glutamyl-tRNA(Glu) + AMP + diphosphate. Its function is as follows. Catalyzes the attachment of glutamate to tRNA(Glu) in a two-step reaction: glutamate is first activated by ATP to form Glu-AMP and then transferred to the acceptor end of tRNA(Glu). The protein is Glutamate--tRNA ligase of Streptococcus thermophilus (strain CNRZ 1066).